The primary structure comprises 167 residues: Large ribosomal subunit protein uL15 (167 aa).

A compositionally biased stretch (polar residues) spans 1-10 (MKLNQISDNP). The segment at 1–37 (MKLNQISDNPGATKDRMRVGRGIGSGKGKTAGRGVKG) is disordered. Residues 21-35 (RGIGSGKGKTAGRGV) are compositionally biased toward gly residues.

The protein belongs to the universal ribosomal protein uL15 family. As to quaternary structure, part of the 50S ribosomal subunit.

Binds to the 23S rRNA. This Methylobacterium radiotolerans (strain ATCC 27329 / DSM 1819 / JCM 2831 / NBRC 15690 / NCIMB 10815 / 0-1) protein is Large ribosomal subunit protein uL15.